We begin with the raw amino-acid sequence, 465 residues long: uncharacterized protein (465 aa).

Disordered stretches follow at residues 1 to 55 (MNSS…SSHQ), 70 to 164 (DFSE…VEGQ), and 221 to 313 (TTDN…KQRV). Positions 40–50 (ENYKDNSDHSN) are enriched in basic and acidic residues. Over residues 73 to 82 (ESFNDNQNLK) the composition is skewed to polar residues. Low complexity predominate over residues 83 to 134 (NFNTTDNNFNDDYNNDYDSNNDSNNDSNNDSNNDYDNESNNYFNNDSNNDSN). Basic and acidic residues predominate over residues 141-150 (ETTKHKLPIE). Residues 221-235 (TTDNQSNTESSQENN) are compositionally biased toward low complexity. Composition is skewed to basic and acidic residues over residues 236–249 (VIKK…DKQP) and 259–275 (IVPK…KSIK). Polar residues predominate over residues 288–306 (IDQSNKLGKSYNTNNNNSK). A coiled-coil region spans residues 390 to 423 (NKASIAELKKMRLEQRKREIEEKRRQVENKKPDS).

This is an uncharacterized protein from Acanthamoeba polyphaga mimivirus (APMV).